A 463-amino-acid polypeptide reads, in one-letter code: L-seryl-tRNA(Sec) selenium transferase (463 aa).

An N6-(pyridoxal phosphate)lysine modification is found at Lys295.

The protein belongs to the SelA family. In terms of assembly, homodecamer; pentamer of dimers. Binds only one seryl-tRNA(Sec) per dimer. Pyridoxal 5'-phosphate serves as cofactor.

It is found in the cytoplasm. It carries out the reaction L-seryl-tRNA(Sec) + selenophosphate + H(+) = L-selenocysteinyl-tRNA(Sec) + phosphate. It functions in the pathway aminoacyl-tRNA biosynthesis; selenocysteinyl-tRNA(Sec) biosynthesis; selenocysteinyl-tRNA(Sec) from L-seryl-tRNA(Sec) (bacterial route): step 1/1. Its function is as follows. Converts seryl-tRNA(Sec) to selenocysteinyl-tRNA(Sec) required for selenoprotein biosynthesis. This Salmonella schwarzengrund (strain CVM19633) protein is L-seryl-tRNA(Sec) selenium transferase.